We begin with the raw amino-acid sequence, 238 residues long: Aspartate/glutamate leucyltransferase (238 aa).

The protein belongs to the R-transferase family. Bpt subfamily.

The protein localises to the cytoplasm. The enzyme catalyses N-terminal L-glutamyl-[protein] + L-leucyl-tRNA(Leu) = N-terminal L-leucyl-L-glutamyl-[protein] + tRNA(Leu) + H(+). The catalysed reaction is N-terminal L-aspartyl-[protein] + L-leucyl-tRNA(Leu) = N-terminal L-leucyl-L-aspartyl-[protein] + tRNA(Leu) + H(+). Functions in the N-end rule pathway of protein degradation where it conjugates Leu from its aminoacyl-tRNA to the N-termini of proteins containing an N-terminal aspartate or glutamate. The protein is Aspartate/glutamate leucyltransferase of Shewanella sp. (strain MR-4).